A 461-amino-acid chain; its full sequence is Gram-negative bacteria-binding protein 2 (461 aa).

The N-terminal stretch at 1-20 (MRWEFLPCLLLLISNNKIFG) is a signal peptide. One can recognise a CBM39 domain in the interval 21–115 (FKVPSINFEM…TRVIINTRLL (95 aa)). Residues N71, N170, N177, and N364 are each glycosylated (N-linked (GlcNAc...) asparagine). Residues 179 to 461 (TTWKHDIRQR…VIDYVRVYAE (283 aa)) enclose the GH16 domain.

This sequence belongs to the insect beta-1,3-glucan binding protein family.

It is found in the secreted. Functionally, involved in the recognition of invading microorganisms. Binds specifically to beta-1,3-glucan and activates the phenoloxidase cascade. The polypeptide is Gram-negative bacteria-binding protein 2 (Drosophila melanogaster (Fruit fly)).